Here is a 302-residue protein sequence, read N- to C-terminus: Tyrosine recombinase XerC (302 aa).

In terms of domain architecture, Core-binding (CB) spans 2-89 (QPLMEQIRAF…AIRSFYRHLL (88 aa)). Residues 110 to 289 (RLPFHLDIDQ…SLDRLMEVYD (180 aa)) enclose the Tyr recombinase domain. Catalysis depends on residues Arg150, Lys174, His241, Arg244, and His267. Tyr276 acts as the O-(3'-phospho-DNA)-tyrosine intermediate in catalysis.

Belongs to the 'phage' integrase family. XerC subfamily. As to quaternary structure, forms a cyclic heterotetrameric complex composed of two molecules of XerC and two molecules of XerD.

The protein resides in the cytoplasm. Its function is as follows. Site-specific tyrosine recombinase, which acts by catalyzing the cutting and rejoining of the recombining DNA molecules. The XerC-XerD complex is essential to convert dimers of the bacterial chromosome into monomers to permit their segregation at cell division. It also contributes to the segregational stability of plasmids. This Pelobacter propionicus (strain DSM 2379 / NBRC 103807 / OttBd1) protein is Tyrosine recombinase XerC.